A 309-amino-acid polypeptide reads, in one-letter code: Homoserine O-succinyltransferase (309 aa).

The active-site Acyl-thioester intermediate is the Cys-142. Substrate contacts are provided by Lys-163 and Ser-192. The active-site Proton acceptor is His-235. Residue Glu-237 is part of the active site. Arg-249 serves as a coordination point for substrate.

The protein belongs to the MetA family.

It is found in the cytoplasm. The catalysed reaction is L-homoserine + succinyl-CoA = O-succinyl-L-homoserine + CoA. It participates in amino-acid biosynthesis; L-methionine biosynthesis via de novo pathway; O-succinyl-L-homoserine from L-homoserine: step 1/1. Its function is as follows. Transfers a succinyl group from succinyl-CoA to L-homoserine, forming succinyl-L-homoserine. The protein is Homoserine O-succinyltransferase of Yersinia pseudotuberculosis serotype O:1b (strain IP 31758).